The chain runs to 205 residues: Probable GTP-binding protein EngB (205 aa).

The region spanning Ser-27 to Pro-201 is the EngB-type G domain. GTP is bound by residues Gly-35–Ser-42, Gly-62–Leu-66, Asp-80–Gly-83, Thr-147–Asp-150, and Phe-180–Ala-182. Mg(2+) is bound by residues Ser-42 and Thr-64.

The protein belongs to the TRAFAC class TrmE-Era-EngA-EngB-Septin-like GTPase superfamily. EngB GTPase family. Mg(2+) serves as cofactor.

Functionally, necessary for normal cell division and for the maintenance of normal septation. This is Probable GTP-binding protein EngB from Pasteurella multocida (strain Pm70).